Consider the following 617-residue polypeptide: MDLQEKLKLLPEKPGVYLMKDEEGNIIYVGKASVLKNRVRQYFQNTDNHPPKVKVMLSHVEDFEYIVTDTELEALMLECNLIKKYKPKYNVLLKDDKNYPYIKITVAEDYPRIMFTRKIDMDGSKYFGPYGSAFAVRETIKLVRKMFPIRTCNVNIEKSLGKVRECLYYHIGLCSAPCTGRIEKEEYRKLVDQAVMFLEGKREWLVEKLKEEMQKAADELRFEEAARLRDQIFAIEKISEKQKVTSINEDEQDVISMARSDDIAHIEVFFVREGKLSGREHYYMKNTEGMGREEIISSFIKQFYESSPSVPKEIIIDVELEEKDLLEDWLSQKRGNRVSITVPLRGKKKELVDMVYQNAVEALKNEILAREKILKDPAVLELSNLLGIEYPKRIEAYDISNVRGEDNVGSMVVFVDGKPKKSEYRKFTIKYVEGQDDYQSMREMIERRFLHALEEKKQIEEGTLSKEKAKFIEMPDLILVDGGIGHVNAALEVIEKLGISVPVYGMVKDSRHRTRGLVGVSGEVQMPVTGRAFRLVAQIQEEAHRFAITFHRERQSKRFKTDLLNIKGIGEKRAKVLYEAFGSIEEIKKASLEELKKVKGMNERSAKAVYEYFHGEV.

A GIY-YIG domain is found at 12–91 (EKPGVYLMKD…IKKYKPKYNV (80 aa)). The region spanning 203–238 (EWLVEKLKEEMQKAADELRFEEAARLRDQIFAIEKI) is the UVR domain.

The protein belongs to the UvrC family. As to quaternary structure, interacts with UvrB in an incision complex.

It localises to the cytoplasm. Its function is as follows. The UvrABC repair system catalyzes the recognition and processing of DNA lesions. UvrC both incises the 5' and 3' sides of the lesion. The N-terminal half is responsible for the 3' incision and the C-terminal half is responsible for the 5' incision. The protein is UvrABC system protein C of Caldanaerobacter subterraneus subsp. tengcongensis (strain DSM 15242 / JCM 11007 / NBRC 100824 / MB4) (Thermoanaerobacter tengcongensis).